Here is a 112-residue protein sequence, read N- to C-terminus: Putative pterin-4-alpha-carbinolamine dehydratase (112 aa).

This sequence belongs to the pterin-4-alpha-carbinolamine dehydratase family.

The enzyme catalyses (4aS,6R)-4a-hydroxy-L-erythro-5,6,7,8-tetrahydrobiopterin = (6R)-L-erythro-6,7-dihydrobiopterin + H2O. The protein is Putative pterin-4-alpha-carbinolamine dehydratase of Shewanella baltica (strain OS155 / ATCC BAA-1091).